The primary structure comprises 335 residues: UPF0353 protein MAP_1207 (335 aa).

2 helical membrane-spanning segments follow: residues 18 to 38 (WFFL…LMQL) and 67 to 87 (LPAI…AGPT). The region spanning 98–294 (VVMLVIDVSQ…QELKSVYATL (197 aa)) is the VWFA domain. Residues 309–329 (VGWVRLGALVLALAALTALLI) form a helical membrane-spanning segment.

The protein belongs to the UPF0353 family.

The protein resides in the cell membrane. The polypeptide is UPF0353 protein MAP_1207 (Mycolicibacterium paratuberculosis (strain ATCC BAA-968 / K-10) (Mycobacterium paratuberculosis)).